Reading from the N-terminus, the 1380-residue chain is Mitogen-activated protein kinase kinase kinase 5 (1380 aa).

The segment at 30 to 97 (CRRGGGAATA…GNSGSGGGRR (68 aa)) is disordered. Over residues 37 to 49 (ATAAEGEPSLQPL) the composition is skewed to low complexity. Residues 50–59 (LVPPPPPPPG) show a composition bias toward pro residues. 2 positions are modified to asymmetric dimethylarginine: Arg85 and Arg87. Ser90 bears the Phosphoserine; by PIM1 and PKB/AKT1 mark. The interaction with PPIA/CYPA stretch occupies residues 649 to 1374 (HCKRFFEMVN…MLCTLWKAII (726 aa)). Residues 687–945 (NGDRVVLGKG…ANDLLIDEFL (259 aa)) enclose the Protein kinase domain. Residues 693–701 (LGKGTYGIV) and Lys716 each bind ATP. Phosphotyrosine is present on Tyr725. Asp810 serves as the catalytic Proton acceptor. A Phosphothreonine; by autocatalysis modification is found at Thr820. Phosphothreonine; by autocatalysis, MELK and MAP3K6 is present on Thr845. Residue Thr849 is modified to Phosphothreonine; by autocatalysis. Ser965 carries the post-translational modification Phosphoserine. Ser973 carries the phosphoserine; by autocatalysis modification. Phosphoserine occurs at positions 1036 and 1040. The tract at residues 1188-1215 (ASESDTADPEDLDVEDEHEELSSNQTVR) is disordered. The segment covering 1192 to 1206 (DTADPEDLDVEDEHE) has biased composition (acidic residues). A coiled-coil region spans residues 1252-1292 (LGRMKIETNRLLEELVRKERELQALLHQAIEEKDQEIRHLK).

Belongs to the protein kinase superfamily. STE Ser/Thr protein kinase family. MAP kinase kinase kinase subfamily. In terms of assembly, homodimer when inactive. Binds both upstream activators and downstream substrates in multimolecular complexes. Part of a cytoplasmic complex made of HIPK1, DAB2IP and MAP3K5 in response to TNF. This complex formation promotes MAP3K5-JNK activation and subsequent apoptosis. Interacts with SOCS1 which recognizes phosphorylation of Tyr-725 and induces MAP3K5/ASK1 degradation in endothelial cells. Interacts with the 14-3-3 family proteins such as YWHAB, YWHAE, YWHAQ, YWHAH, YWHAZ and SFN. Interacts with ARRB2, BIRC2, DAB2IP, IGF1R, MAP3K6/ASK2, PIM1, PGAM5, SOCS1, STUB1, TRAF2 and TXN. Interacts with ERN1 in a TRAF2-dependent manner. Interacts with calcineurin subunit PPP3R1, PPP5C, PPM1L and TRAF6. Interacts (via N-terminus) with RAF1 and this interaction inhibits the proapoptotic function of MAP3K5. Interacts with DAB2IP (via N-terminus C2 domain); the interaction occurs in a TNF-alpha-dependent manner. Interacts with DUSP13A; may positively regulate apoptosis. Interacts with PPIA/CYPA. Interacts with PRMT1; the interaction results in MAP3K5 methylation by PRMT1 which inhibits MAP3K5 activation. Interacts with TRAF2; the interaction is inhibited by PRMT1. Interacts with TRIM48. It depends on Mg(2+) as a cofactor. Ser-90 and Ser-1040 are inactivating phosphorylation sites, the former of which is phosphorylated by AKT1. Phosphorylated at Ser-973 which induces association of MAP3K5/ASK1 with the 14-3-3 family proteins and suppresses MAP3K5/ASK1 activity. Calcineurin (CN) dephosphorylates this site. Also dephosphorylated and activated by PGAM5. Phosphorylated at Thr-845 through autophosphorylation and by MAP3K6/ASK2 which leads to activation. Thr-845 is dephosphorylated by PPP5C. Phosphorylation at Ser-973 in response to oxidative stress is negatively regulated by PPIA/CYPA. In terms of processing, ubiquitinated. Tumor necrosis factor (TNF) induces TNFR2-dependent ubiquitination, leading to proteasomal degradation. Ubiquitinated by RC3H2 in a TRIM48-dependent manner. Post-translationally, methylation at Arg-85 and Arg-87 by PRMT1 promotes association of MAP3K5 with thioredoxin and negatively regulates MAP3K5 association with TRAF2, inhibiting MAP3K5 activation. Methylation is blocked by ubiquitination of PRMT1 by TRIM48. As to expression, expressed in various adult mouse tissues including heart, brain, lung, liver and kidney.

It is found in the cytoplasm. The protein resides in the endoplasmic reticulum. It carries out the reaction L-seryl-[protein] + ATP = O-phospho-L-seryl-[protein] + ADP + H(+). The catalysed reaction is L-threonyl-[protein] + ATP = O-phospho-L-threonyl-[protein] + ADP + H(+). Its activity is regulated as follows. Activated by various stressors, including oxidative stress, endoplasmic reticulum stress, and calcium overload, as well as by receptor-mediated inflammatory signals, such as the tumor necrosis factor (TNF) and lipopolysaccharide (LPS). Homophilic association of MAP3K5/ASK1 through the C-terminal coiled-coil domains and the heteromeric complex formation of MAP3K5/ASK1 with the reduced form of thioredoxin (TXN), constitutes an inactive form of the kinase. Upon ROS-induced dissociation of TXN from MAP3K5/ASK1, TRAF2 and TRAF6 are reciprocally recruited to MAP3K5/ASK1 and form the active MAP3K5/ASK1 signalosome, in which TRAF2 and TRAF6 appear to facilitate the active configuration of MAP3K5/ASK1. MAP3K5/ASK1 activity is also regulated through several phosphorylation and dephosphorylation events. Thr-845 is an activating phosphorylation site that is autophosphorylated and phosphorylated by MAP3K6/ASK2 and dephosphorylated by PPP5C. Ser-90 and Ser-1040 are inactivating phosphorylation sites, the former of which is phosphorylated by AKT1. Phosphorylation of Ser-973 induces association of MAP3K5/ASK1 with the 14-3-3 family proteins, which suppresses MAP3K5/ASK1 activity. Calcium/calmodulin-activated protein phosphatase calcineurin (PPP3CA) has been shown to directly dephosphorylate this site. SOCS1 binds to ASK1 by recognizing phosphorylation of Tyr-725 and induces MAP3K5/ASK1 degradation in endothelial cells. Also dephosphorylated and activated by PGAM5. Contains an N-terminal autoinhibitory domain. Serine/threonine kinase which acts as an essential component of the MAP kinase signal transduction pathway. Plays an important role in the cascades of cellular responses evoked by changes in the environment. Mediates signaling for determination of cell fate such as differentiation and survival. Plays a crucial role in the apoptosis signal transduction pathway through mitochondria-dependent caspase activation. MAP3K5/ASK1 is required for the innate immune response, which is essential for host defense against a wide range of pathogens. Mediates signal transduction of various stressors like oxidative stress as well as by receptor-mediated inflammatory signals, such as the tumor necrosis factor (TNF) or lipopolysaccharide (LPS). Once activated, acts as an upstream activator of the MKK/JNK signal transduction cascade and the p38 MAPK signal transduction cascade through the phosphorylation and activation of several MAP kinase kinases like MAP2K4/SEK1, MAP2K3/MKK3, MAP2K6/MKK6 and MAP2K7/MKK7. These MAP2Ks in turn activate p38 MAPKs and c-jun N-terminal kinases (JNKs). Both p38 MAPK and JNKs control the transcription factors activator protein-1 (AP-1). This chain is Mitogen-activated protein kinase kinase kinase 5 (Map3k5), found in Mus musculus (Mouse).